A 926-amino-acid chain; its full sequence is Nitrate reductase [NADH] (926 aa).

The segment at 1–85 (MAASVDRQYH…SDSEEDDDEN (85 aa)) is disordered. Positions 36-46 (YTFSNPPSSNG) are enriched in polar residues. The segment covering 58 to 73 (DNNSNSNNGSNNNNNR) has biased composition (low complexity). C204 lines the Mo-molybdopterin pocket. A Cytochrome b5 heme-binding domain is found at 551–626 (SKMYSMSEVK…LEDFRIGELI (76 aa)). Heme-binding residues include H586 and H609. The FAD-binding FR-type domain occupies 670 to 782 (RVKIPCKLIE…KGPLGHIEYL (113 aa)). FAD is bound by residues 722–725 (RAYT), 739–743 (VVKVY), F744, F751, 756–758 (VMS), and T809.

Belongs to the nitrate reductase family. As to quaternary structure, homodimer. The cofactor is FAD. Heme is required as a cofactor. Mo-molybdopterin serves as cofactor.

The enzyme catalyses nitrite + NAD(+) + H2O = nitrate + NADH + H(+). Functionally, nitrate reductase is a key enzyme involved in the first step of nitrate assimilation in plants, fungi and bacteria. In Spinacia oleracea (Spinach), this protein is Nitrate reductase [NADH] (NIA).